Here is a 69-residue protein sequence, read N- to C-terminus: DNA gyrase inhibitor YacG (69 aa).

4 residues coordinate Zn(2+): cysteine 13, cysteine 16, cysteine 32, and cysteine 36.

This sequence belongs to the DNA gyrase inhibitor YacG family. In terms of assembly, interacts with GyrB. Zn(2+) serves as cofactor.

In terms of biological role, inhibits all the catalytic activities of DNA gyrase by preventing its interaction with DNA. Acts by binding directly to the C-terminal domain of GyrB, which probably disrupts DNA binding by the gyrase. This is DNA gyrase inhibitor YacG from Neisseria meningitidis serogroup C / serotype 2a (strain ATCC 700532 / DSM 15464 / FAM18).